Reading from the N-terminus, the 170-residue chain is Ribulose bisphosphate carboxylase small subunit, chloroplastic (170 aa).

2 transit peptides (chloroplast) span residues 1–46 (MAPT…GRIR) and 1–47 (MAPT…RIRC).

The protein belongs to the RuBisCO small chain family. Heterohexadecamer of 8 large and 8 small subunits.

Its subcellular location is the plastid. It localises to the chloroplast. In terms of biological role, ruBisCO catalyzes two reactions: the carboxylation of D-ribulose 1,5-bisphosphate, the primary event in carbon dioxide fixation, as well as the oxidative fragmentation of the pentose substrate. Both reactions occur simultaneously and in competition at the same active site. Although the small subunit is not catalytic it is essential for maximal activity. This Zea mays (Maize) protein is Ribulose bisphosphate carboxylase small subunit, chloroplastic.